Consider the following 267-residue polypeptide: Tryptophan synthase alpha chain (267 aa).

Catalysis depends on proton acceptor residues Glu47 and Asp58.

The protein belongs to the TrpA family. In terms of assembly, tetramer of two alpha and two beta chains.

It carries out the reaction (1S,2R)-1-C-(indol-3-yl)glycerol 3-phosphate + L-serine = D-glyceraldehyde 3-phosphate + L-tryptophan + H2O. It participates in amino-acid biosynthesis; L-tryptophan biosynthesis; L-tryptophan from chorismate: step 5/5. In terms of biological role, the alpha subunit is responsible for the aldol cleavage of indoleglycerol phosphate to indole and glyceraldehyde 3-phosphate. This is Tryptophan synthase alpha chain from Pelodictyon phaeoclathratiforme (strain DSM 5477 / BU-1).